A 537-amino-acid chain; its full sequence is CTP synthase (537 aa).

The amidoligase domain stretch occupies residues 1 to 267; that stretch reads MAKYIFVTGG…DEYVIKRLNL (267 aa). Position 13 (S13) interacts with CTP. Position 13 (S13) interacts with UTP. 14 to 19 contacts ATP; the sequence is SLGKGI. Residue Y54 participates in L-glutamine binding. ATP is bound at residue D71. Residues D71 and E141 each contribute to the Mg(2+) site. CTP-binding positions include 148-150, 188-193, and K224; these read DIE and KTKPTQ. UTP-binding positions include 188–193 and K224; that span reads KTKPTQ. 240–242 contacts ATP; sequence RDV. The Glutamine amidotransferase type-1 domain maps to 292–534; that stretch reads EVALVGKYVD…VKAMLNLKIN (243 aa). An L-glutamine-binding site is contributed by G354. C381 (nucleophile; for glutamine hydrolysis) is an active-site residue. Residues 382–385, E405, and R462 contribute to the L-glutamine site; that span reads LGMQ. Active-site residues include H507 and E509.

The protein belongs to the CTP synthase family. In terms of assembly, homotetramer.

It catalyses the reaction UTP + L-glutamine + ATP + H2O = CTP + L-glutamate + ADP + phosphate + 2 H(+). The enzyme catalyses L-glutamine + H2O = L-glutamate + NH4(+). It carries out the reaction UTP + NH4(+) + ATP = CTP + ADP + phosphate + 2 H(+). The protein operates within pyrimidine metabolism; CTP biosynthesis via de novo pathway; CTP from UDP: step 2/2. Its activity is regulated as follows. Allosterically activated by GTP, when glutamine is the substrate; GTP has no effect on the reaction when ammonia is the substrate. The allosteric effector GTP functions by stabilizing the protein conformation that binds the tetrahedral intermediate(s) formed during glutamine hydrolysis. Inhibited by the product CTP, via allosteric rather than competitive inhibition. Functionally, catalyzes the ATP-dependent amination of UTP to CTP with either L-glutamine or ammonia as the source of nitrogen. Regulates intracellular CTP levels through interactions with the four ribonucleotide triphosphates. This Caldanaerobacter subterraneus subsp. tengcongensis (strain DSM 15242 / JCM 11007 / NBRC 100824 / MB4) (Thermoanaerobacter tengcongensis) protein is CTP synthase.